Consider the following 184-residue polypeptide: Inactive ribonuclease-like protein 9 (184 aa).

Positions 1 to 25 are cleaved as a signal peptide; it reads MKPLVIKFAWPLPLLLLLLLPPKLQ. 3 disulfides stabilise this stretch: cysteine 93/cysteine 148, cysteine 111/cysteine 163, and cysteine 118/cysteine 125. 2 N-linked (GlcNAc...) asparagine glycosylation sites follow: asparagine 147 and asparagine 179.

The protein belongs to the pancreatic ribonuclease family.

The protein resides in the secreted. Functionally, does not exhibit any ribonuclease activity. This Mus musculus (Mouse) protein is Inactive ribonuclease-like protein 9 (Rnase9).